Here is a 385-residue protein sequence, read N- to C-terminus: Non-structural maintenance of chromosomes element 4 homolog A (385 aa).

Residues M1–D69 form a disordered region. Composition is skewed to basic and acidic residues over residues P10 to R21 and S42 to L55. The segment covering E56–M68 has biased composition (acidic residues). T345 is subject to Phosphothreonine. A Phosphoserine modification is found at S377.

The protein belongs to the NSE4 family. As to quaternary structure, component of the SMC5-SMC6 complex which consists at least of SMC5, SMC6, NSMCE2, NSMCE1, NSMCE4A or EID3 and NSMCE3. NSMCE1, NSMCE4A or EID3 and NSMCE3 probably form a subcomplex that bridges the head domains of the SMC5:SMC6 heterodimer. Interacts with NSMCE3.

It localises to the nucleus. It is found in the chromosome. The protein localises to the telomere. Its function is as follows. Component of the SMC5-SMC6 complex, a complex involved in DNA double-strand breaks by homologous recombination. The complex may promote sister chromatid homologous recombination by recruiting the SMC1-SMC3 cohesin complex to double-strand breaks. The complex is required for telomere maintenance via recombination in ALT (alternative lengthening of telomeres) cell lines and mediates sumoylation of shelterin complex (telosome) components which is proposed to lead to shelterin complex disassembly in ALT-associated PML bodies (APBs). Is involved in positive regulation of response to DNA damage stimulus. The polypeptide is Non-structural maintenance of chromosomes element 4 homolog A (NSMCE4A) (Homo sapiens (Human)).